A 299-amino-acid polypeptide reads, in one-letter code: Protein PRY1 (299 aa).

Positions 1–19 are cleaved as a signal peptide; it reads MKLSKLSILTSALATSALA. A disordered region spans residues 103 to 157; the sequence is TDSTTTLTSSESTSQSLAQATTTSTPAAASTTSTPAATTTTSQAAATSSASSSDS. Residues 167-281 form the SCP domain; the sequence is LAEHNKKRAL…AWGDYVICSY (115 aa).

It belongs to the CRISP family. O-glycosylated.

It is found in the secreted. Functionally, secreted protein required for efficient export of lipids such as acetylated sterols. Acts in detoxification of hydrophobic compounds. The chain is Protein PRY1 from Saccharomyces cerevisiae (strain ATCC 204508 / S288c) (Baker's yeast).